A 423-amino-acid polypeptide reads, in one-letter code: Gamma-glutamyl phosphate reductase 2 (423 aa).

It belongs to the gamma-glutamyl phosphate reductase family.

It localises to the cytoplasm. It carries out the reaction L-glutamate 5-semialdehyde + phosphate + NADP(+) = L-glutamyl 5-phosphate + NADPH + H(+). It functions in the pathway amino-acid biosynthesis; L-proline biosynthesis; L-glutamate 5-semialdehyde from L-glutamate: step 2/2. Catalyzes the NADPH-dependent reduction of L-glutamate 5-phosphate into L-glutamate 5-semialdehyde and phosphate. The product spontaneously undergoes cyclization to form 1-pyrroline-5-carboxylate. This is Gamma-glutamyl phosphate reductase 2 from Bacillus licheniformis (strain ATCC 14580 / DSM 13 / JCM 2505 / CCUG 7422 / NBRC 12200 / NCIMB 9375 / NCTC 10341 / NRRL NRS-1264 / Gibson 46).